We begin with the raw amino-acid sequence, 574 residues long: Streptolysin O (574 aa).

Positions 1–36 (MKDMSNKKIFKKYSRVAGLLTAALIVGNLVTANADS) are cleaved as a signal peptide. Low complexity predominate over residues 37–52 (NKQNTANTETTTTNEQ). Disordered stretches follow at residues 37-64 (NKQNTANTETTTTNEQPKPESSELTTEK) and 84-111 (KEMPLESAEKEEKKSEDNKKSEEDHTEE). The segment covering 53–64 (PKPESSELTTEK) has biased composition (basic and acidic residues). 4 beta stranded membrane-spanning segments follow: residues 263-276 (KSQIEAALNVNSKI), 283-292 (IDFKSISKGE), 361-370 (SNDVEAAFSA), and 378-390 (KTNGKYSDILENS). Residues 532-542 (ECTGLAWEWWR) carry the Conserved undecapeptide motif. Positions 564–565 (TL) match the Cholesterol binding motif.

The protein belongs to the cholesterol-dependent cytolysin family. As to quaternary structure, homooligomeric pore complex of 35 to 50 subunits; when inserted in the host membrane.

The protein resides in the secreted. It is found in the host cell membrane. Functionally, a cholesterol-dependent toxin that causes cytolysis by forming pores in cholesterol containing host membranes. After binding to target membranes, the protein undergoes a major conformation change, leading to its insertion in the host membrane and formation of an oligomeric pore complex. Cholesterol is required for binding to host membranes, membrane insertion and pore formation; cholesterol binding is mediated by a Thr-Leu pair in the C-terminus. Can be reversibly inactivated by oxidation. This Streptococcus dysgalactiae subsp. equisimilis (Streptococcus equisimilis) protein is Streptolysin O (slo).